We begin with the raw amino-acid sequence, 118 residues long: Large ribosomal subunit protein uL18 (118 aa).

The protein belongs to the universal ribosomal protein uL18 family. Part of the 50S ribosomal subunit; part of the 5S rRNA/L5/L18/L25 subcomplex. Contacts the 5S and 23S rRNAs.

Its function is as follows. This is one of the proteins that bind and probably mediate the attachment of the 5S RNA into the large ribosomal subunit, where it forms part of the central protuberance. The protein is Large ribosomal subunit protein uL18 of Lactobacillus acidophilus (strain ATCC 700396 / NCK56 / N2 / NCFM).